A 658-amino-acid chain; its full sequence is Probable Xaa-Pro aminopeptidase P (658 aa).

Mn(2+) contacts are provided by Asp449, Asp460, Glu558, and Glu572.

Belongs to the peptidase M24B family. It depends on Mn(2+) as a cofactor.

It catalyses the reaction Release of any N-terminal amino acid, including proline, that is linked to proline, even from a dipeptide or tripeptide.. Its function is as follows. Catalyzes the removal of a penultimate prolyl residue from the N-termini of peptides. This chain is Probable Xaa-Pro aminopeptidase P (ampp), found in Aspergillus clavatus (strain ATCC 1007 / CBS 513.65 / DSM 816 / NCTC 3887 / NRRL 1 / QM 1276 / 107).